The primary structure comprises 158 residues: Protein OPG060 (158 aa).

Belongs to the orthopoxvirus OPG058 family.

This is Protein OPG060 (OPG060) from Cynomys gunnisoni (Gunnison's prairie dog).